We begin with the raw amino-acid sequence, 309 residues long: Probable manganese-dependent inorganic pyrophosphatase (309 aa).

Positions 9, 13, 15, 75, 97, and 149 each coordinate Mn(2+).

The protein belongs to the PPase class C family. The cofactor is Mn(2+).

The protein localises to the cytoplasm. It catalyses the reaction diphosphate + H2O = 2 phosphate + H(+). The chain is Probable manganese-dependent inorganic pyrophosphatase from Staphylococcus epidermidis (strain ATCC 35984 / DSM 28319 / BCRC 17069 / CCUG 31568 / BM 3577 / RP62A).